Consider the following 132-residue polypeptide: Small ribosomal subunit protein uS8 (132 aa).

This sequence belongs to the universal ribosomal protein uS8 family. As to quaternary structure, part of the 30S ribosomal subunit. Contacts proteins S5 and S12.

Functionally, one of the primary rRNA binding proteins, it binds directly to 16S rRNA central domain where it helps coordinate assembly of the platform of the 30S subunit. This chain is Small ribosomal subunit protein uS8, found in Latilactobacillus sakei subsp. sakei (strain 23K) (Lactobacillus sakei subsp. sakei).